Consider the following 136-residue polypeptide: Peptide methionine sulfoxide reductase MsrB (136 aa).

The MsrB domain occupies 7–129 (SSSHENTLTE…NSASLSFTDD (123 aa)). Residues C46, C49, C95, and C98 each contribute to the Zn(2+) site. The active-site Nucleophile is C118.

This sequence belongs to the MsrB Met sulfoxide reductase family. Zn(2+) serves as cofactor.

It catalyses the reaction L-methionyl-[protein] + [thioredoxin]-disulfide + H2O = L-methionyl-(R)-S-oxide-[protein] + [thioredoxin]-dithiol. This chain is Peptide methionine sulfoxide reductase MsrB, found in Erwinia tasmaniensis (strain DSM 17950 / CFBP 7177 / CIP 109463 / NCPPB 4357 / Et1/99).